A 75-amino-acid polypeptide reads, in one-letter code: Putative antitoxin VapB12 (75 aa).

Its function is as follows. Putative antitoxin component of a possible type II toxin-antitoxin (TA) system. The cognate toxin is VapC12. The chain is Putative antitoxin VapB12 (vapB12) from Mycobacterium tuberculosis (strain CDC 1551 / Oshkosh).